Here is a 216-residue protein sequence, read N- to C-terminus: uncharacterized protein (216 aa).

Residues Met1–Lys216 form the N-acetyltransferase domain.

Belongs to the acetyltransferase family.

This is an uncharacterized protein from Dictyostelium discoideum (Social amoeba).